The following is a 295-amino-acid chain: 2S seed storage protein (295 aa).

Residues 1-20 form the signal peptide; that stretch reads MAKQIVLALAFAALVAFATA. Positions 21–161 are excised as a propeptide; that stretch reads HTTIITTTIE…TITTTVTESN (141 aa). Polar residues predominate over residues 195-208; that stretch reads EQQMQQSPRSTRPY. The tract at residues 195–215 is disordered; it reads EQQMQQSPRSTRPYQQRPGQQ.

This sequence belongs to the 2S seed storage albumins family. Post-translationally, the 38 kDa precursor may be cleaved into two polypeptides of approximately the same size. The mature protein is composed of a single polypeptide containing one or more intra-molecular disulfide linkages.

Functionally, this is a 2S seed storage protein. The chain is 2S seed storage protein (HAG5) from Helianthus annuus (Common sunflower).